The following is a 49-amino-acid chain: Large ribosomal subunit protein bL33B (49 aa).

It belongs to the bacterial ribosomal protein bL33 family.

This chain is Large ribosomal subunit protein bL33B, found in Bacillus pumilus (strain SAFR-032).